A 180-amino-acid polypeptide reads, in one-letter code: Translation initiation factor IF-3 (180 aa).

The protein belongs to the IF-3 family. As to quaternary structure, monomer.

It localises to the cytoplasm. Functionally, IF-3 binds to the 30S ribosomal subunit and shifts the equilibrium between 70S ribosomes and their 50S and 30S subunits in favor of the free subunits, thus enhancing the availability of 30S subunits on which protein synthesis initiation begins. The chain is Translation initiation factor IF-3 from Xylella fastidiosa (strain 9a5c).